Reading from the N-terminus, the 452-residue chain is MAANVPPSAETLLSGAAAHPPKTAEEIANQYDLLPKLIPYLDRHLVFPLLEFSSGSQEDDKEMIRAKYELLKHTNMTDYVANLWKEINDSDTIPDEFVKKREEVLAKLQHYQEQSAKITELLQDEDVVGNLRSDKVANLKFLEEEHGVTADMVNSLFDYGRFQYSCGSYGNAAELLYQFRVLSTDNDKVASATWGKLASEILTTSWDGAMEEVQKVKDSIETRLFNNPLGQLQNRSWLIHWSLFPFFNYDPARDVLTDLFFSPAYINTIQTSCPWILRYLAAAVITNRNRAHKNSNVYQKQLKDLIRVVRQEGYEYSDPITDFVKALYVDFDFEEAQKKLGEAEDVLRSDFFLVSAADAFVEAARHLISESYCKIHQRIDIKDLSTRLGLNQDEGEKWIVNLIRDTRVDAKIDYKEGTVIMNHPPQSVYQQVIEKTKGAFFRTQVLSAAVAK.

The PCI domain occupies 257–426 (TDLFFSPAYI…GTVIMNHPPQ (170 aa)).

Belongs to the eIF-3 subunit E family. Component of the eukaryotic translation initiation factor 3 (eIF-3) complex.

The protein localises to the cytoplasm. Its function is as follows. Component of the eukaryotic translation initiation factor 3 (eIF-3) complex, which is involved in protein synthesis of a specialized repertoire of mRNAs and, together with other initiation factors, stimulates binding of mRNA and methionyl-tRNAi to the 40S ribosome. The eIF-3 complex specifically targets and initiates translation of a subset of mRNAs involved in cell proliferation. The polypeptide is Eukaryotic translation initiation factor 3 subunit E (int6) (Aspergillus niger (strain ATCC MYA-4892 / CBS 513.88 / FGSC A1513)).